The following is a 155-amino-acid chain: 3-hydroxyacyl-[acyl-carrier-protein] dehydratase FabZ (155 aa).

H59 is a catalytic residue.

The protein belongs to the thioester dehydratase family. FabZ subfamily.

Its subcellular location is the cytoplasm. It catalyses the reaction a (3R)-hydroxyacyl-[ACP] = a (2E)-enoyl-[ACP] + H2O. Involved in unsaturated fatty acids biosynthesis. Catalyzes the dehydration of short chain beta-hydroxyacyl-ACPs and long chain saturated and unsaturated beta-hydroxyacyl-ACPs. The polypeptide is 3-hydroxyacyl-[acyl-carrier-protein] dehydratase FabZ (Bartonella henselae (strain ATCC 49882 / DSM 28221 / CCUG 30454 / Houston 1) (Rochalimaea henselae)).